We begin with the raw amino-acid sequence, 74 residues long: MKQIALFLIKCYKFISQFLPSICRFQPSCSTYAYQAIETYGFFKGSLLTFKRIIRCRPFCAGGFDPVPLPKKKI.

The protein belongs to the UPF0161 family.

It is found in the cell inner membrane. Its function is as follows. Could be involved in insertion of integral membrane proteins into the membrane. The chain is Putative membrane protein insertion efficiency factor from Endomicrobium trichonymphae.